Consider the following 396-residue polypeptide: Cell adhesion molecule 3 (396 aa).

The signal sequence occupies residues 1–22 (MGAPSALPLLLLLACSWAPGGA). The 102-residue stretch at 23–124 (NLSQDDSQPW…VRTAKSLVTV (102 aa)) folds into the Ig-like V-type domain. Residues 23-328 (NLSQDDSQPW…PVPSSSSTYH (306 aa)) lie on the Extracellular side of the membrane. 3 disulfides stabilise this stretch: Cys-48-Cys-108, Cys-150-Cys-207, and Cys-252-Cys-297. 2 Ig-like C2-type domains span residues 128–226 (PQKP…QRIE) and 231–313 (PTAM…FTLN). Asn-288 is a glycosylation site (N-linked (GlcNAc...) asparagine). Residues 329–349 (AIIGGIVAFIVFLLLILLIFL) form a helical membrane-spanning segment. The Cytoplasmic portion of the chain corresponds to 350–396 (GHYLIRHKGTYLTHEAKGSDDAPDADTAIINAEGGQSGGDDKKEYFI). Positions 365-396 (AKGSDDAPDADTAIINAEGGQSGGDDKKEYFI) are disordered. Phosphoserine is present on Ser-386.

This sequence belongs to the nectin family. Homodimer. Can form trans-heterodimers with NECTIN3. Interacts with EPB41L1, DLG3, PALS2 and CASK. In terms of tissue distribution, mainly expressed in brain, in neuronal cell bodies of cerebellum, cortex, hippocampus, hypothalamus and spinal cord. In spinal cord predominantly expressed in motor neurons. Expressed in axons, presynaptic nerve terminals, glia cell processes.

The protein resides in the cell membrane. Its subcellular location is the cell junction. In terms of biological role, involved in cell-cell adhesion. Has both calcium-independent homophilic cell-cell adhesion activity and calcium-independent heterophilic cell-cell adhesion activity with IGSF4, NECTIN1 and NECTIN3. Interaction with EPB41L1 may regulate structure or function of cell-cell junctions. This is Cell adhesion molecule 3 (Cadm3) from Mus musculus (Mouse).